The following is a 783-amino-acid chain: Protein transport protein SEC23 B (783 aa).

Residues Cys-59, Cys-62, Cys-81, and Cys-84 each contribute to the Zn(2+) site. A zinc finger-like region spans residues 59-84; it reads CRICTAALNPFARVDFLAKIWICPIC.

Belongs to the SEC23/SEC24 family. SEC23 subfamily. As to quaternary structure, component of the coat protein complex II (COPII), composed of at least five proteins: the Sec23/24 complex, the Sec13/31 complex and Sar1. Interacts with SEC24A.

The protein localises to the cytoplasmic vesicle. The protein resides in the COPII-coated vesicle membrane. Its subcellular location is the endoplasmic reticulum membrane. It is found in the membrane. Functionally, component of the coat protein complex II (COPII) which promotes the formation of transport vesicles from the endoplasmic reticulum (ER). The coat has two main functions, the physical deformation of the endoplasmic reticulum membrane into vesicles and the selection of cargo molecules. This chain is Protein transport protein SEC23 B, found in Arabidopsis thaliana (Mouse-ear cress).